Reading from the N-terminus, the 107-residue chain is Transcriptional regulator Rv3488 (107 aa).

Cd(2+) contacts are provided by His16, Glu30, His34, and His101.

As to quaternary structure, homodimer.

Its function is as follows. May have transcription regulation and metal-detoxifying functions through which it may enhance intracellular survival of mycobacteria. Binds to its own promoter region and to the Rv1999c promoter region. It displays strong affinity for cadmium ions, but can also bind zinc, manganese and nickel. Expression increases the intracellular survival of recombinant M.smegmatis in murine macrophage cell line and increases its tolerance to cadmium ions. The polypeptide is Transcriptional regulator Rv3488 (Mycobacterium tuberculosis (strain ATCC 25618 / H37Rv)).